A 454-amino-acid polypeptide reads, in one-letter code: Allantoinase (454 aa).

Zn(2+) is bound by residues His-60, His-62, Lys-147, His-183, His-239, and Asp-312. N6-carboxylysine is present on Lys-147.

This sequence belongs to the metallo-dependent hydrolases superfamily. Allantoinase family. Homotetramer. The cofactor is Zn(2+). Post-translationally, carboxylation allows a single lysine to coordinate two zinc ions.

It catalyses the reaction (S)-allantoin + H2O = allantoate + H(+). The protein operates within nitrogen metabolism; (S)-allantoin degradation; allantoate from (S)-allantoin: step 1/1. In terms of biological role, catalyzes the conversion of allantoin (5-ureidohydantoin) to allantoic acid by hydrolytic cleavage of the five-member hydantoin ring. The polypeptide is Allantoinase (Bacillus velezensis (strain DSM 23117 / BGSC 10A6 / LMG 26770 / FZB42) (Bacillus amyloliquefaciens subsp. plantarum)).